Here is a 359-residue protein sequence, read N- to C-terminus: Aminomethyltransferase (359 aa).

It belongs to the GcvT family. As to quaternary structure, the glycine cleavage system is composed of four proteins: P, T, L and H.

The catalysed reaction is N(6)-[(R)-S(8)-aminomethyldihydrolipoyl]-L-lysyl-[protein] + (6S)-5,6,7,8-tetrahydrofolate = N(6)-[(R)-dihydrolipoyl]-L-lysyl-[protein] + (6R)-5,10-methylene-5,6,7,8-tetrahydrofolate + NH4(+). In terms of biological role, the glycine cleavage system catalyzes the degradation of glycine. This chain is Aminomethyltransferase, found in Idiomarina loihiensis (strain ATCC BAA-735 / DSM 15497 / L2-TR).